The sequence spans 362 residues: Peptide chain release factor 1 (362 aa).

The residue at position 237 (Q237) is an N5-methylglutamine. Residues 282 to 296 are compositionally biased toward basic and acidic residues; the sequence is QQEEDKRRAEADSTR. The tract at residues 282–304 is disordered; the sequence is QQEEDKRRAEADSTRRSILSTGD.

This sequence belongs to the prokaryotic/mitochondrial release factor family. Methylated by PrmC. Methylation increases the termination efficiency of RF1.

The protein resides in the cytoplasm. Peptide chain release factor 1 directs the termination of translation in response to the peptide chain termination codons UAG and UAA. The chain is Peptide chain release factor 1 from Tolumonas auensis (strain DSM 9187 / NBRC 110442 / TA 4).